Consider the following 399-residue polypeptide: Putative 8-amino-7-oxononanoate synthase (399 aa).

Arg-24 contributes to the substrate binding site. 111 to 112 (GW) provides a ligand contact to pyridoxal 5'-phosphate. A substrate-binding site is contributed by His-141. Pyridoxal 5'-phosphate-binding positions include Ser-189, 214–217 (DEAH), and 243–246 (TFSK). The residue at position 246 (Lys-246) is an N6-(pyridoxal phosphate)lysine. Residue Thr-360 coordinates substrate.

Belongs to the class-II pyridoxal-phosphate-dependent aminotransferase family. BioF subfamily. As to quaternary structure, homodimer. It depends on pyridoxal 5'-phosphate as a cofactor.

It carries out the reaction 6-carboxyhexanoyl-[ACP] + L-alanine + H(+) = (8S)-8-amino-7-oxononanoate + holo-[ACP] + CO2. It functions in the pathway cofactor biosynthesis; biotin biosynthesis. Functionally, catalyzes the decarboxylative condensation of pimeloyl-[acyl-carrier protein] and L-alanine to produce 8-amino-7-oxononanoate (AON), [acyl-carrier protein], and carbon dioxide. The chain is Putative 8-amino-7-oxononanoate synthase (bioF) from Bordetella bronchiseptica (strain ATCC BAA-588 / NCTC 13252 / RB50) (Alcaligenes bronchisepticus).